We begin with the raw amino-acid sequence, 571 residues long: Hsp70-Hsp90 organizing protein 2 (571 aa).

3 TPR repeats span residues 2–35 (ADEA…TPTN), 37–69 (VLFS…KPDW), and 70–103 (GKGY…DPSN). Positions 117 to 137 (ASRSRASAPNPFGDAFQGPEM) are disordered. Residues 134–173 (GPEMWSKLTADPSTRGLLKQPDFVNMMKEIQRNPSNLNLY) form the STI1 1 domain. Position 168 is a phosphoserine (S168). Residues 198 to 207 (DDMEIGEEEM) show a composition bias toward acidic residues. Residues 198–245 (DDMEIGEEEMAVPSRKEPEVEKKRKPEPEPEPEPEFGEEKQKKLKAQK) are disordered. Basic and acidic residues-rich tracts occupy residues 211–225 (SRKE…KPEP) and 234–245 (GEEKQKKLKAQK). The Bipartite nuclear localization signal motif lies at 240 to 257 (KLKAQKEKELGNAAYKKK). TPR repeat units lie at residues 243–276 (AQKE…DDED), 278–310 (SYIT…GREL), 322–355 (TRKG…HRNP), 382–415 (GDEE…NPKD), 417–449 (RAYS…DPTF), and 450–483 (LKGY…DPNN). Positions 520–559 (DPEIQNILTDPVMRQVLSDLQENPAAAQKHMQNPMIMNKI) constitute an STI1 2 domain.

Co-chaperone that forms a complex with HSP70 and HSP90 and preproteins (e.g. chloroplast preproteins). Phosphorylated. Post-translationally, acetylated.

It localises to the cytoplasm. Its subcellular location is the nucleus. Its function is as follows. Mediates the association of the molecular chaperones HSP70 and HSP90. Mediates nuclear encoded chloroplast preproteins binding to HSP90 prior to chloroplastic sorting. This is Hsp70-Hsp90 organizing protein 2 (HOP2) from Arabidopsis thaliana (Mouse-ear cress).